The chain runs to 287 residues: ATP synthase gamma chain (287 aa).

The protein belongs to the ATPase gamma chain family. In terms of assembly, F-type ATPases have 2 components, CF(1) - the catalytic core - and CF(0) - the membrane proton channel. CF(1) has five subunits: alpha(3), beta(3), gamma(1), delta(1), epsilon(1). CF(0) has three main subunits: a, b and c.

The protein localises to the cell inner membrane. Its function is as follows. Produces ATP from ADP in the presence of a proton gradient across the membrane. The gamma chain is believed to be important in regulating ATPase activity and the flow of protons through the CF(0) complex. The protein is ATP synthase gamma chain of Ruthia magnifica subsp. Calyptogena magnifica.